We begin with the raw amino-acid sequence, 206 residues long: dCTP deaminase, dUMP-forming (206 aa).

DCTP contacts are provided by residues 117 to 122 (RSSFGR), aspartate 135, 143 to 145 (TLE), glutamine 163, tyrosine 177, lysine 184, and glutamine 188. The active-site Proton donor/acceptor is the glutamate 145.

It belongs to the dCTP deaminase family. Homotrimer.

It catalyses the reaction dCTP + 2 H2O = dUMP + NH4(+) + diphosphate. Its pathway is pyrimidine metabolism; dUMP biosynthesis; dUMP from dCTP: step 1/1. Bifunctional enzyme that catalyzes both the deamination of dCTP to dUTP and the hydrolysis of dUTP to dUMP without releasing the toxic dUTP intermediate. This Methanococcus vannielii (strain ATCC 35089 / DSM 1224 / JCM 13029 / OCM 148 / SB) protein is dCTP deaminase, dUMP-forming.